The primary structure comprises 94 residues: Cell division topological specificity factor (94 aa).

Belongs to the MinE family.

Functionally, prevents the cell division inhibition by proteins MinC and MinD at internal division sites while permitting inhibition at polar sites. This ensures cell division at the proper site by restricting the formation of a division septum at the midpoint of the long axis of the cell. The protein is Cell division topological specificity factor of Acetivibrio thermocellus (strain ATCC 27405 / DSM 1237 / JCM 9322 / NBRC 103400 / NCIMB 10682 / NRRL B-4536 / VPI 7372) (Clostridium thermocellum).